We begin with the raw amino-acid sequence, 519 residues long: B3 domain-containing protein Os03g0620400 (519 aa).

Positions 26–119 form a DNA-binding region, TF-B3 1; it reads MKCFHLQMSA…RFEVLILDSD (94 aa). Residues 138 to 218 form a disordered region; it reads ERNAAPVDIS…DPQMPPGRNY (81 aa). Residues 189-209 show a composition bias toward acidic residues; the sequence is SGEEGTDSSTSEDESSYELDD. DNA-binding regions (TF-B3) lie at residues 249 to 349 and 416 to 516; these read VAIM…LRET and YVSI…IRRN.

It localises to the nucleus. This chain is B3 domain-containing protein Os03g0620400, found in Oryza sativa subsp. japonica (Rice).